The sequence spans 395 residues: 1-deoxy-D-xylulose 5-phosphate reductoisomerase (395 aa).

Residues T10, G11, S12, I13, and N123 each coordinate NADPH. K124 contacts 1-deoxy-D-xylulose 5-phosphate. Residue E125 coordinates NADPH. D149 lines the Mn(2+) pocket. Residues S150, E151, S185, and H208 each contribute to the 1-deoxy-D-xylulose 5-phosphate site. E151 lines the Mn(2+) pocket. Residue G214 participates in NADPH binding. 1-deoxy-D-xylulose 5-phosphate is bound by residues S221, N226, K227, and E230. E230 contacts Mn(2+).

Belongs to the DXR family. It depends on Mg(2+) as a cofactor. Mn(2+) is required as a cofactor.

The catalysed reaction is 2-C-methyl-D-erythritol 4-phosphate + NADP(+) = 1-deoxy-D-xylulose 5-phosphate + NADPH + H(+). It participates in isoprenoid biosynthesis; isopentenyl diphosphate biosynthesis via DXP pathway; isopentenyl diphosphate from 1-deoxy-D-xylulose 5-phosphate: step 1/6. Functionally, catalyzes the NADPH-dependent rearrangement and reduction of 1-deoxy-D-xylulose-5-phosphate (DXP) to 2-C-methyl-D-erythritol 4-phosphate (MEP). The chain is 1-deoxy-D-xylulose 5-phosphate reductoisomerase from Shewanella sediminis (strain HAW-EB3).